A 363-amino-acid polypeptide reads, in one-letter code: 3-isopropylmalate dehydrogenase (363 aa).

78–91 (GKKWDYLPIESRPE) serves as a coordination point for NAD(+). Substrate contacts are provided by arginine 99, arginine 109, arginine 138, and aspartate 227. The Mg(2+) site is built by aspartate 227, aspartate 251, and aspartate 255. 285-297 (GSAPDIEGKNIAN) is a binding site for NAD(+).

Belongs to the isocitrate and isopropylmalate dehydrogenases family. LeuB type 1 subfamily. Homodimer. It depends on Mg(2+) as a cofactor. Mn(2+) serves as cofactor.

It is found in the cytoplasm. It carries out the reaction (2R,3S)-3-isopropylmalate + NAD(+) = 4-methyl-2-oxopentanoate + CO2 + NADH. Its pathway is amino-acid biosynthesis; L-leucine biosynthesis; L-leucine from 3-methyl-2-oxobutanoate: step 3/4. Its function is as follows. Catalyzes the oxidation of 3-carboxy-2-hydroxy-4-methylpentanoate (3-isopropylmalate) to 3-carboxy-4-methyl-2-oxopentanoate. The product decarboxylates to 4-methyl-2 oxopentanoate. The sequence is that of 3-isopropylmalate dehydrogenase (leuB) from Buchnera aphidicola subsp. Rhopalosiphum padi.